The chain runs to 843 residues: Beta-mannosidase B (843 aa).

Glu-430 acts as the Proton donor in catalysis. N-linked (GlcNAc...) asparagine glycosylation is present at Asn-721.

Belongs to the glycosyl hydrolase 2 family. Beta-mannosidase B subfamily.

It catalyses the reaction Hydrolysis of terminal, non-reducing beta-D-mannose residues in beta-D-mannosides.. Its pathway is glycan metabolism; N-glycan degradation. Its function is as follows. Exoglycosidase that cleaves the single beta-linked mannose residue from the non-reducing end of beta-mannosidic oligosaccharides of various complexity and length. Prefers mannobiose over mannotriose and has no activity against polymeric mannan. Is also severely restricted by galactosyl substitutions at the +1 subsite. The polypeptide is Beta-mannosidase B (mndB) (Aspergillus terreus (strain NIH 2624 / FGSC A1156)).